A 420-amino-acid chain; its full sequence is UDP-N-acetyl-D-mannosamine dehydrogenase (420 aa).

NAD(+)-binding residues include tyrosine 13, isoleucine 14, aspartate 33, threonine 85, and threonine 126. UDP-N-acetyl-alpha-D-mannosaminouronate is bound by residues arginine 160, valine 161, lysine 212, asparagine 216, arginine 219, histidine 250, arginine 252, and glycine 263. Lysine 212 functions as the Proton donor/acceptor in the catalytic mechanism. Catalysis depends on cysteine 266, which acts as the Nucleophile. The UDP-N-acetyl-alpha-D-mannosaminouronate site is built by phenylalanine 330 and lysine 331. Arginine 338 contributes to the NAD(+) binding site. UDP-N-acetyl-alpha-D-mannosaminouronate is bound at residue lysine 416.

This sequence belongs to the UDP-glucose/GDP-mannose dehydrogenase family. WecC subfamily. Homodimer.

It catalyses the reaction UDP-N-acetyl-alpha-D-mannosamine + 2 NAD(+) + H2O = UDP-N-acetyl-alpha-D-mannosaminouronate + 2 NADH + 3 H(+). It participates in bacterial outer membrane biogenesis; enterobacterial common antigen biosynthesis. Catalyzes the four-electron oxidation of UDP-N-acetyl-D-mannosamine (UDP-ManNAc), reducing NAD(+) and releasing UDP-N-acetylmannosaminuronic acid (UDP-ManNAcA). The protein is UDP-N-acetyl-D-mannosamine dehydrogenase of Shigella flexneri.